A 97-amino-acid polypeptide reads, in one-letter code: RxLR effector protein CRE10 (97 aa).

The signal sequence occupies residues 1–21; that stretch reads MRLSYILVVVIAVTLQACVCA. The short motif at 48-66 is the RxLR-dEER element; sequence RLLRGVKKRTAEREVQEER.

Belongs to the RxLR effector family.

Its subcellular location is the secreted. The protein localises to the host cell. Its function is as follows. Effector that is involved in host plant infection. Contributes to virulence during the early infection stage, by inhibiting plant defense responses induced by both PAMP-triggered immunity (PTI) and effector-triggered immunity (ETI). The chain is RxLR effector protein CRE10 from Phytophthora infestans (strain T30-4) (Potato late blight agent).